A 1025-amino-acid chain; its full sequence is Leucyl-cystinyl aminopeptidase (1025 aa).

An N-acetylmethionine modification is found at Met-1. Residues 1–109 (METFTNDRLQ…DGTCSVPSAR (109 aa)) lie on the Cytoplasmic side of the membrane. The short motif at 53 to 54 (LL) is the Dileucine internalization motif element. Tyr-70 carries the post-translational modification Phosphotyrosine. The Dileucine internalization motif signature appears at 76–77 (LL). A phosphoserine; by PKC/PRKCZ; in vitro mark is found at Ser-80 and Ser-91. The tankyrase binding stretch occupies residues 96-101 (RQSPDG). A helical; Signal-anchor for type II membrane protein transmembrane segment spans residues 110 to 131 (TLVICVFVIVVAVSVIMVIYLL). The Extracellular portion of the chain corresponds to 132–1025 (PRCTFTKEGC…RNLKTLTLWL (894 aa)). 5 N-linked (GlcNAc...) asparagine glycosylation sites follow: Asn-145, Asn-184, Asn-215, Asn-256, and Asn-266. A substrate-binding site is contributed by Glu-295. Residues Asn-368 and Asn-374 are each glycosylated (N-linked (GlcNAc...) asparagine). 428 to 432 (GAMEN) serves as a coordination point for substrate. N-linked (GlcNAc...) asparagine glycosylation is present at Asn-447. His-464 is a Zn(2+) binding site. Glu-465 (proton acceptor) is an active-site residue. His-468 and Glu-487 together coordinate Zn(2+). 9 N-linked (GlcNAc...) asparagine glycosylation sites follow: Asn-525, Asn-578, Asn-664, Asn-682, Asn-695, Asn-758, Asn-834, Asn-850, and Asn-989.

It belongs to the peptidase M1 family. As to quaternary structure, homodimer. Binds tankyrases 1 and 2. It depends on Zn(2+) as a cofactor. In terms of processing, N-glycosylated. As to expression, highly expressed in heart, brain, spleen, lung, kidney and white adipose tissue. Detected at lower levels in skeletal muscle and liver.

The protein localises to the cell membrane. It is found in the endomembrane system. The enzyme catalyses Release of an N-terminal amino acid, Cys-|-Xaa-, in which the half-cystine residue is involved in a disulfide loop, notably in oxytocin or vasopressin. Hydrolysis rates on a range of aminoacyl arylamides exceed that for the cystinyl derivative, however.. Release of an N-terminal amino acid, cleave before cysteine, leucine as well as other amino acids. Degrades peptide hormones such as oxytocin, vasopressin and angiotensin III, and plays a role in maintaining homeostasis during pregnancy. May be involved in the inactivation of neuronal peptides in the brain. Cleaves Met-enkephalin and dynorphin. Binds angiotensin IV and may be the angiotensin IV receptor in the brain. This chain is Leucyl-cystinyl aminopeptidase (Lnpep), found in Rattus norvegicus (Rat).